Here is a 566-residue protein sequence, read N- to C-terminus: NXPE family member 3 (566 aa).

A signal peptide spans methionine 1 to serine 32. Asparagine 64, asparagine 172, asparagine 242, asparagine 303, and asparagine 344 each carry an N-linked (GlcNAc...) asparagine glycan.

The protein belongs to the NXPE family.

Its subcellular location is the secreted. This Danio rerio (Zebrafish) protein is NXPE family member 3 (nxpe3).